The chain runs to 296 residues: Light-independent protochlorophyllide reductase iron-sulfur ATP-binding protein (296 aa).

ATP contacts are provided by residues G39–T44 and K68. S43 provides a ligand contact to Mg(2+). Residues C124 and C158 each coordinate [4Fe-4S] cluster. Residue N209–R210 participates in ATP binding.

This sequence belongs to the NifH/BchL/ChlL family. As to quaternary structure, homodimer. Protochlorophyllide reductase is composed of three subunits; ChlL, ChlN and ChlB. It depends on [4Fe-4S] cluster as a cofactor.

It carries out the reaction chlorophyllide a + oxidized 2[4Fe-4S]-[ferredoxin] + 2 ADP + 2 phosphate = protochlorophyllide a + reduced 2[4Fe-4S]-[ferredoxin] + 2 ATP + 2 H2O. It functions in the pathway porphyrin-containing compound metabolism; chlorophyll biosynthesis (light-independent). Functionally, component of the dark-operative protochlorophyllide reductase (DPOR) that uses Mg-ATP and reduced ferredoxin to reduce ring D of protochlorophyllide (Pchlide) to form chlorophyllide a (Chlide). This reaction is light-independent. The L component serves as a unique electron donor to the NB-component of the complex, and binds Mg-ATP. The sequence is that of Light-independent protochlorophyllide reductase iron-sulfur ATP-binding protein from Prochlorococcus marinus (strain MIT 9211).